The chain runs to 396 residues: Elongation factor Tu (396 aa).

Residues 11-205 (KPHVNIGTIG…IVDEYIPTPE (195 aa)) enclose the tr-type G domain. The G1 stretch occupies residues 20–27 (GHVDHGKT). 20-27 (GHVDHGKT) contacts GTP. Threonine 27 contacts Mg(2+). Positions 61 to 65 (GITIN) are G2. Positions 82–85 (DAPG) are G3. GTP contacts are provided by residues 82-86 (DAPGH) and 137-140 (NKCD). A G4 region spans residues 137–140 (NKCD). The tract at residues 175–177 (SAL) is G5.

This sequence belongs to the TRAFAC class translation factor GTPase superfamily. Classic translation factor GTPase family. EF-Tu/EF-1A subfamily. In terms of assembly, monomer.

Its subcellular location is the cytoplasm. It carries out the reaction GTP + H2O = GDP + phosphate + H(+). In terms of biological role, GTP hydrolase that promotes the GTP-dependent binding of aminoacyl-tRNA to the A-site of ribosomes during protein biosynthesis. The protein is Elongation factor Tu of Lactobacillus acidophilus (strain ATCC 700396 / NCK56 / N2 / NCFM).